A 132-amino-acid polypeptide reads, in one-letter code: Small ribosomal subunit protein uS8 (132 aa).

Belongs to the universal ribosomal protein uS8 family. As to quaternary structure, part of the 30S ribosomal subunit. Contacts proteins S5 and S12.

One of the primary rRNA binding proteins, it binds directly to 16S rRNA central domain where it helps coordinate assembly of the platform of the 30S subunit. The polypeptide is Small ribosomal subunit protein uS8 (Rickettsia akari (strain Hartford)).